The primary structure comprises 94 residues: Small ribosomal subunit protein bS18 (94 aa).

It belongs to the bacterial ribosomal protein bS18 family. As to quaternary structure, part of the 30S ribosomal subunit. Forms a tight heterodimer with protein bS6.

Binds as a heterodimer with protein bS6 to the central domain of the 16S rRNA, where it helps stabilize the platform of the 30S subunit. The polypeptide is Small ribosomal subunit protein bS18 (Acetivibrio thermocellus (strain ATCC 27405 / DSM 1237 / JCM 9322 / NBRC 103400 / NCIMB 10682 / NRRL B-4536 / VPI 7372) (Clostridium thermocellum)).